A 91-amino-acid chain; its full sequence is MKTLLLTLVVMTIVCLDLGYTLICFISSHDSVTCAPGENVCFLKSWCDAWCGSRGKKLSFGCAATCPRVNPGIDIECCSTDNCNPHPKLRP.

The signal sequence occupies residues 1-21; it reads MKTLLLTLVVMTIVCLDLGYT. 5 cysteine pairs are disulfide-bonded: Cys24–Cys41, Cys34–Cys62, Cys47–Cys51, Cys66–Cys77, and Cys78–Cys83.

This sequence belongs to the three-finger toxin family. Long-chain subfamily. Type II alpha-neurotoxin sub-subfamily. In terms of tissue distribution, expressed by the venom gland.

The protein resides in the secreted. In terms of biological role, binds with high affinity to muscular (alpha-1/CHRNA1) and neuronal (alpha-7/CHRNA7) nicotinic acetylcholine receptor (nAChR) and inhibits acetylcholine from binding to the receptor, thereby impairing neuromuscular and neuronal transmission. This Ophiophagus hannah (King cobra) protein is Long neurotoxin LNTX28.